A 101-amino-acid chain; its full sequence is Small ribosomal subunit protein uS14 (101 aa).

Belongs to the universal ribosomal protein uS14 family. In terms of assembly, part of the 30S ribosomal subunit. Contacts proteins S3 and S10.

Functionally, binds 16S rRNA, required for the assembly of 30S particles and may also be responsible for determining the conformation of the 16S rRNA at the A site. The sequence is that of Small ribosomal subunit protein uS14 from Pasteurella multocida (strain Pm70).